The following is a 228-amino-acid chain: Ribulose-phosphate 3-epimerase (228 aa).

Substrate is bound at residue Ser9. Residues His34, Asp36, and His70 each coordinate a divalent metal cation. Asp36 acts as the Proton acceptor in catalysis. Substrate-binding positions include His70, Gly146–Gly149, Asp179–Gly181, and Gly201–Ser202. Position 179 (Asp179) interacts with a divalent metal cation. The active-site Proton donor is the Asp179.

This sequence belongs to the ribulose-phosphate 3-epimerase family. Requires a divalent metal cation as cofactor.

It carries out the reaction D-ribulose 5-phosphate = D-xylulose 5-phosphate. It participates in carbohydrate degradation. Its function is as follows. Catalyzes the reversible epimerization of D-ribulose 5-phosphate to D-xylulose 5-phosphate. The sequence is that of Ribulose-phosphate 3-epimerase from Buchnera aphidicola subsp. Baizongia pistaciae (strain Bp).